The primary structure comprises 196 residues: SPRY domain-containing protein 7 (196 aa).

At Ala-2 the chain carries N-acetylalanine. The B30.2/SPRY domain maps to 2–184 (ATSVLCCLRC…FSEFYHTPPP (183 aa)).

In Homo sapiens (Human), this protein is SPRY domain-containing protein 7 (SPRYD7).